Reading from the N-terminus, the 158-residue chain is Oocyte-secreted protein 2 (158 aa).

The first 17 residues, 1–17 (MALEVLMLLAVLIWTGA), serve as a signal peptide directing secretion.

It belongs to the PLAC1 family. As to expression, highly expressed in oocytes.

It localises to the secreted. The protein resides in the cytoplasm. Functionally, involved in oocyte maturation. This chain is Oocyte-secreted protein 2 (OOSP2), found in Homo sapiens (Human).